Reading from the N-terminus, the 222-residue chain is Probable GTP-binding protein EngB (222 aa).

One can recognise an EngB-type G domain in the interval 25-199 (AGVEVAFAGR…SQLLQNWFDT (175 aa)). GTP contacts are provided by residues 33-40 (GRSNAGKS), 60-64 (GRTQH), 78-81 (DLPG), 145-148 (TKAD), and 178-180 (FSS). Ser-40 and Thr-62 together coordinate Mg(2+).

This sequence belongs to the TRAFAC class TrmE-Era-EngA-EngB-Septin-like GTPase superfamily. EngB GTPase family. Requires Mg(2+) as cofactor.

Necessary for normal cell division and for the maintenance of normal septation. The sequence is that of Probable GTP-binding protein EngB from Nitrosomonas europaea (strain ATCC 19718 / CIP 103999 / KCTC 2705 / NBRC 14298).